Here is a 490-residue protein sequence, read N- to C-terminus: Transcription factor MYB101 (490 aa).

Residues 1 to 21 (MDGGGETTATATMEGRGLKKG) form a disordered region. 2 HTH myb-type domains span residues 15–67 (GRGL…ANHL) and 68–122 (RPNL…KRRQ). 2 consecutive DNA-binding regions (H-T-H motif) follow at residues 43-67 (WNAV…ANHL) and 95-118 (WARM…NTRM). The tract at residues 168-206 (YTNSSNTSSSSSSFSSSSSQPSKRLRPDPLVSTNPGLNP) is disordered. Residues 169 to 186 (TNSSNTSSSSSSFSSSSS) are compositionally biased toward low complexity.

Present mostly in flowers, siliques and floral shoot tips. Expression is restricted to the subapical pith cells of both vegetative and flowering plants and to the hypocotyl hook. Expressed in pollen grains and pollen tube. Mostly expressed in mature pollen grains, and, to a lower extent, in inflorescences and siliques.

It localises to the nucleus. In terms of biological role, transcription activator. Binds to 5'-CAACTGTC-3' and/or 5'-TAACAAA-3' motif in target gene promoter (e.g. alpha-amylase) to promote their expression. Positive regulator of abscisic acid (ABA) responses leading to growth arrest during seed germination. Promotes the expression of aleurone-related genes (e.g. CP1, CP, GASA1, BXL1 and BXL2) in seeds. Together with MYB33 and MYB65, promotes the programmed cell death (PCD) leading to vacuolation of protein storage vacuoles (PSVs) in the aleurone layers during seed germination. Maybe involved in the regulation of leaves lamina morphogenesis. Involved in pollen grain development. Together with MYB97 and MYB120, functions as a male factor that controls pollen tube-synergid interaction in fertilization. Required for pollen tube growth arrest and sperm cell release in the female gametophyte, probably via the regulation of pollen tube-specific gene expression. The chain is Transcription factor MYB101 from Arabidopsis thaliana (Mouse-ear cress).